A 620-amino-acid polypeptide reads, in one-letter code: Synchronized import protein 1 (620 aa).

The tract at residues 1–32 (MGRSKKRSRASSSRLNPLRKAGSNDNNKDTNV) is disordered. ARM repeat units lie at residues 25 to 64 (DNNK…VLCE), 66 to 106 (AHMR…NLSL), 181 to 221 (DDIL…TTLD), 258 to 299 (ANEL…NIDP), 340 to 386 (IKLQ…NFLP), 435 to 470 (DSQD…NRAL), 471 to 510 (INVQ…TYAM), and 564 to 607 (RGGF…TLDS).

This sequence belongs to the nuclear import and ribosome assembly adapter family. In terms of assembly, forms a heterotrimeric complex with RPL5 and RPL11A or RPL11B; interaction of this complex with KAP104 allows the nuclear import of the heterotrimer. Component of a hexameric 5S RNP precursor complex, composed of 5S RNA, RRS1, RPF2, RPL5, RPL11A/RPL11B and SYO1; this complex acts as a precursor for ribosome assembly.

It is found in the cytoplasm. The protein resides in the nucleus. Functionally, nuclear import adapter that specifically recruits the two functionally and topologically linked ribosomal proteins RPL5 and RPL11 (encoded by RPL11A and RPL11B). Guarantees that this cargo pair remains bound together from the time of synthesis in the cytoplasm until delivery to the nascent 5S rRNA in the nucleus. The polypeptide is Synchronized import protein 1 (SYO1) (Saccharomyces cerevisiae (strain ATCC 204508 / S288c) (Baker's yeast)).